The sequence spans 1256 residues: MGAKEATVRGPGASPVHRTCHLIPLLLAGMLTTGLAQSPVPTSAPRGFWALSENLTVVEGSTVKLWCGVRAPGSVVQWAKDGLLLGPNPKIPGFPRYSLEGDSAKGEFHLLIEACDLSDDAEYECQVGRSELGPELVSPSVILSILVSPKVLQLTPEAGSTVTWVAGQEYVVTCVSGDAKPAPDIIFIQGGRTVEDVSSSVNEGSEEKLFFTEAEARVTPQSSDNGQLLVCEGSNPALATPIKASFTMNILFPPGPPVIDWPGLNEGHVRAGENLELPCIARGGNPPATLQWLKNGKPVSIAWGTEHAQAVAHSVLVMTVRPEDHGARLSCQSYNSVSAETQERSITLQVTFPPSAVTILGSTSQSENKNVTLCCLTKSSRPRVLLRWWLGGRQLLPTDETVMDGLHGGHISMSNLTLLVKREDNGLSLTCEAFSDAFSKETFKKSLTLNVKYPAQKLWIEGPPEGQSIRTGTRVRLVCLAIGGNPEPSLTWLKDSRPVNDPRQSQEPRRVQLGSVEKSGSTFSRELVLIIGPPDNLAKFSCKAGQLSASTQLVVQFPPTNLTILANSSALRPGDALNLTCVSISSNPPVNLSLDKEGERLDDVAAKPQSAPFKGSAASRSVFLRVSSRDHGHRVTCRAHSEALRETVSSFYRLNVLYPPEFLGEQVRAVTVVEQGQALLPVSVSANPAPEAFNWTFRGYRLSPAGGPRHRILSGGALQLWNVTRADDGFYQLHCQNSEGTAEALLKLDVHYAPTIRALKDPTEVNVGGSVDIVCTVDANPILPEMFSWERLGEDEEELNLDDMEKMSKGSTGRLRIRQAKLSQAGAYQCIVDNGVAPAARGLVRLVVRFAPQVDHPTPLTKVAAAGDSTSSATLHCRARGVPNIDFTWTKNGVPLDLQDPRYTEHKYHQGVVHSSLLTIANVSAAQDYALFKCTATNALGSDHTNIQLVSISRPDPPLGLKVVSVSPHSVGLEWKPGFDGGLPQRFQIRYEALESPGFLYMDVLPAQATTFTLTGLKPSTRYRIWLLASNALGDSGLTDKGIQVSITTPGLDQAPEDTDQPLPTEQPPGPPRLPLLPVLFAVGGLLLLSNASCVGGLLWRRRLRRLAEEISEKTEAGSEEDRIRNEYEESQWTGDRDTRSSTVSTAEVDPHYYSMRDFSPQLPPTLEEVSYRQAFTGIEDEDMAFPGHLYDEVERVYGPPGVWGPLYDEVQMDPYDLRWPEVKYEDPRGIYDQVAADMDAGEPGSLPFELRGHLV.

An N-terminal signal peptide occupies residues 1-35; the sequence is MGAKEATVRGPGASPVHRTCHLIPLLLAGMLTTGL. Over 36–1078 the chain is Extracellular; that stretch reads AQSPVPTSAP…PGPPRLPLLP (1043 aa). 6 consecutive Ig-like C2-type domains span residues 39 to 144, 149 to 247, 256 to 347, 354 to 448, 454 to 554, and 558 to 649; these read PVPT…VILS, PKVL…ASFT, PPVI…RSIT, PSAV…KSLT, PAQK…TQLV, and PPTN…ETVS. A glycan (N-linked (GlcNAc...) asparagine) is linked at Asn-54. Cystine bridges form between Cys-67–Cys-125, Cys-174–Cys-231, and Cys-279–Cys-331. 2 N-linked (GlcNAc...) asparagine glycosylation sites follow: Asn-370 and Asn-415. Cys-375 and Cys-431 are oxidised to a cystine. Position 446 is a phosphoserine (Ser-446). An intrachain disulfide couples Cys-479 to Cys-542. The segment at 491–516 is disordered; sequence TWLKDSRPVNDPRQSQEPRRVQLGSV. Basic and acidic residues predominate over residues 494-510; the sequence is KDSRPVNDPRQSQEPRR. N-linked (GlcNAc...) asparagine glycans are attached at residues Asn-561, Asn-578, Asn-591, and Asn-722. Cys-581 and Cys-637 are oxidised to a cystine. Ig-like C2-type domains follow at residues 754–846 and 852–953; these read PTIR…LVRL and PQVD…VSIS. 2 cysteine pairs are disulfide-bonded: Cys-775/Cys-830 and Cys-877/Cys-934. One can recognise a Fibronectin type-III domain in the interval 957–1051; the sequence is PPLGLKVVSV…GIQVSITTPG (95 aa). Residues 1048–1071 form a disordered region; sequence TTPGLDQAPEDTDQPLPTEQPPGP. A helical membrane pass occupies residues 1079 to 1099; sequence VLFAVGGLLLLSNASCVGGLL. Residues 1100-1256 are Cytoplasmic-facing; sequence WRRRLRRLAE…LPFELRGHLV (157 aa). The residue at position 1112 (Ser-1112) is a Phosphoserine. Basic and acidic residues predominate over residues 1112–1128; that stretch reads SEKTEAGSEEDRIRNEY. The disordered stretch occupies residues 1112–1143; the sequence is SEKTEAGSEEDRIRNEYEESQWTGDRDTRSST. Position 1115 is a phosphothreonine (Thr-1115). Position 1119 is a phosphoserine (Ser-1119). Residue Tyr-1208 is modified to Phosphotyrosine; by FYN.

It belongs to the immunoglobulin superfamily. Interacts with NPHS2 and with CD2AP (via C-terminal domain). Interacts with MAGI1 (via PDZ 2 and 3 domains) forming a tripartite complex with IGSF5/JAM4. Forms a complex with ACTN4, CASK, IQGAP1, MAGI2, SPTAN1 and SPTBN1. Interacts with DDN; the interaction is direct. Self-associates (via the Ig-like domains). Also interacts (via the Ig-like domains) with KIRREL1 and KIRREL2; the interaction with KIRREL1 is dependent on KIRREL1 glycosylation. Interacts with KIRREL3. Interacts with phosphatidylinositol 3-kinase regulatory subunit PIK3R1; the interaction is reduced by high glucose levels. In terms of processing, phosphorylated at Tyr-1208 by FYN, leading to the recruitment and activation of phospholipase C-gamma-1/PLCG1. Tyrosine phosphorylation is reduced by high glucose levels. Dephosphorylated by tensin TNS2 which leads to reduced binding of NPHN1 to PIK3R1. As to expression, expressed in kidney glomeruli. In the embryo, expressed in the mesonephric kidney at 11 dpc with strong expression in cranial tubules with podocyte-like structures. Expression is observed in the podocytes of the developing kidney from 13 dpc. High expression is also detected in the developing cerebellum, hindbrain, spinal cord, retina and hypothalamus. Expressed in skeletal muscle during myoblast fusion such as in the adult following acute injury and in the embryo but not detected in uninjured adult skeletal muscle. Isoform 1 and isoform 2 are expressed in the newborn brain and developing cerebellum. Isoform 1 is the predominant isoform in adult kidney.

The protein resides in the cell membrane. In terms of biological role, seems to play a role in the development or function of the kidney glomerular filtration barrier. Regulates glomerular vascular permeability. May anchor the podocyte slit diaphragm to the actin cytoskeleton. Plays a role in skeletal muscle formation through regulation of myoblast fusion. In Mus musculus (Mouse), this protein is Nephrin (Nphs1).